A 219-amino-acid chain; its full sequence is Protoglabretal synthase ISM2 (219 aa).

The next 5 membrane-spanning stretches (helical) occupy residues 26–46 (VHAWNGAATFLVMYGIWVLAG), 59–79 (LMIWWAVSGLIHIIHEGYWLF), 112–132 (AVVGIEGIAVIIVGPASLFAV), 144–164 (ILQLALALVQFYGSTLYFITA), and 178–198 (YYKYFIAQGGTWLLFPALIII). In terms of domain architecture, EXPERA spans 55-197 (TDKWLMIWWA…TWLLFPALII (143 aa)).

The protein belongs to the EBP family.

It localises to the membrane. It carries out the reaction 7,8-epoxymelianol = protoglabretal. Its pathway is secondary metabolite biosynthesis; terpenoid biosynthesis. In terms of biological role, isomerase involved in the biosynthesis of glabretanes triterpene natural products such as glabretal, a component with in vitro antiproliferative properties on lymphocytes. Catalyzes the conversion of 7,8-epoxymelianol to protoglabretal via skeletal rearrangements. The sequence is that of Protoglabretal synthase ISM2 from Ailanthus altissima (Tree-of-heaven).